A 426-amino-acid chain; its full sequence is Putative F-box/LRR-repeat protein At4g15060 (426 aa).

The F-box domain maps to 25–71 (MDKISRLPDDLLVKVLLFLPTKIAVSTSILSKRWEFLWMWLPKLEYH). 9 LRR repeats span residues 50-75 (STSI…NTNY), 80-106 (EQRL…RLKF), 160-187 (ILKL…LLKR), 188-213 (VTYK…VVER), 221-259 (TLSI…KLTD), 265-290 (ETEL…HIDS), 311-337 (CVKV…KLCP), 338-363 (CDSN…EIKL), and 373-399 (DPAC…TWTW).

This is Putative F-box/LRR-repeat protein At4g15060 from Arabidopsis thaliana (Mouse-ear cress).